Here is a 562-residue protein sequence, read N- to C-terminus: Aureusidin synthase (562 aa).

Intrachain disulfides connect C71-C86 and C85-C148. 6 residues coordinate Cu cation: H147, H168, H177, H301, H305, and H335. Positions 151-168 (CAGAYNQAGFTNLKLQIH) form a cross-link, 2'-(S-cysteinyl)-histidine (Cys-His).

Belongs to the tyrosinase family. As to quaternary structure, monomer. The cofactor is Cu(2+). In terms of processing, glycosylated. Post-translationally, contains probably N- and C-terminal propeptides. Expressed in petals. Not detected in stems and leaves.

The protein resides in the vacuole lumen. The enzyme catalyses 2',4,4',6'-tetrahydroxychalcone 4'-O-beta-D-glucoside + O2 = aureusidin 6-O-beta-glucoside + H2O. It carries out the reaction 2 2',3,4,4',6'-pentahydroxychalcone 4'-O-beta-D-glucoside + O2 + 2 H(+) = 2 aureusidin 6-O-beta-glucoside + 2 H2O. It catalyses the reaction 2',3,4,4',6'-pentahydroxychalcone 4'-O-beta-D-glucoside + O2 + H(+) = bracteatin 6-O-beta-glucoside + H2O. With respect to regulation, h(2)O(2) activates the 3-hydroxylation and oxidative cyclization of tetrahydroxychalcone but inhibits reaction with pentahydroxychalcone. Inhibited by phenylthiourea. Its function is as follows. Involved in the biosynthesis of aurones, plant flavonoids that provide yellow coloration to flowers. Can use tetrahydroxychalcone (THC), pentahydroxychalcone (PHC), THC 4'-glucoside and PHC 4'-glucoside as substrates, but not 2'-hydroxychalcone, 4-hydroxychalcone, PHC 3-glucoside, 2',6'-dihydroxy-4,4'-dimethoxychalcone, naringenin, eriodictyol and 4,4',6-trihydroxyaurone. Can also produce bracteatin from PHC. The polypeptide is Aureusidin synthase (AS1) (Antirrhinum majus (Garden snapdragon)).